Reading from the N-terminus, the 152-residue chain is MSFRRFVEIGRVARAVYGPDQGKLVAIVDVIDQNRALVDGPCTHVARKSMNFKELELTNLKAKFPHSAKTGVVKKAWEKDEISKKWEESHLAKKIAAKEKRKTLTDFERFKLMKAKQARNRLIKIEFGKLRKALKKTPAKPTRKPNKKLHKV.

It belongs to the eukaryotic ribosomal protein eL14 family.

This chain is Large ribosomal subunit protein eL14 (RPL14), found in Lumbricus rubellus (Humus earthworm).